The following is a 159-amino-acid chain: Cyclic pyranopterin monophosphate synthase (159 aa).

Substrate contacts are provided by residues 75 to 77 (LCH) and 113 to 114 (ME). The active site involves aspartate 128.

Belongs to the MoaC family. In terms of assembly, homohexamer; trimer of dimers.

The enzyme catalyses (8S)-3',8-cyclo-7,8-dihydroguanosine 5'-triphosphate = cyclic pyranopterin phosphate + diphosphate. Its pathway is cofactor biosynthesis; molybdopterin biosynthesis. In terms of biological role, catalyzes the conversion of (8S)-3',8-cyclo-7,8-dihydroguanosine 5'-triphosphate to cyclic pyranopterin monophosphate (cPMP). The sequence is that of Cyclic pyranopterin monophosphate synthase from Cereibacter sphaeroides (strain ATCC 17023 / DSM 158 / JCM 6121 / CCUG 31486 / LMG 2827 / NBRC 12203 / NCIMB 8253 / ATH 2.4.1.) (Rhodobacter sphaeroides).